An 854-amino-acid polypeptide reads, in one-letter code: Envelope glycoprotein gp160 (854 aa).

Positions 1–20 (MGRLLIKILIIAIGISIGIG) are cleaved as a signal peptide. Topologically, residues 21–705 (NLYVTVFYGI…IILGLRFAWV (685 aa)) are extracellular. A glycan (N-linked (GlcNAc...) asparagine; by host) is linked at Asn-35. A disulfide bond links Cys-42 and Cys-55. N-linked (GlcNAc...) asparagine; by host glycans are attached at residues Asn-68, Asn-115, Asn-136, Asn-153, Asn-168, Asn-182, and Asn-199. 5 disulfide bridges follow: Cys-99-Cys-207, Cys-106-Cys-198, Cys-111-Cys-154, Cys-220-Cys-250, and Cys-230-Cys-242. The tract at residues 111 to 153 (CVELNGTATTKATTTATTTMTTPCQNCSTEQIEGEMAEEPASN) is V1. Residues 154-198 (CTFAIAGYQRDVKKNYSMTWYDQELVCNNKTGSEKGSKDCYMIHC) are V2. N-linked (GlcNAc...) asparagine; by host glycosylation is found at Asn-244, Asn-255, Asn-265, Asn-271, Asn-283, Asn-295, Asn-305, Asn-355, Asn-400, Asn-409, Asn-458, Asn-472, and Asn-478. Positions 300 to 332 (CRRPGNKTVLPVTIMAGLVFHSQKYNTRLKQAW) are V3. Cys-300 and Cys-333 form a disulfide bridge. 2 disulfide bridges follow: Cys-382–Cys-457 and Cys-389–Cys-430. Residues 389-430 (CKMDWFINYLNNRTEDAEGTNRTCDKGKPGPGPCVQRTYVAC) are V4. The tract at residues 473-481 (KSGPINVTL) is V5. A fusion peptide region spans residues 523-543 (VPFVLGFLGFLGAAGTAMGAA). Residues 586–602 (LNARVTALEKYLEDQAR) form an immunosuppression region. 2 N-linked (GlcNAc...) asparagine; by host glycosylation sites follow: Asn-630 and Asn-646. Positions 633–672 (WLEWERQINALEGNITQLLEEAQNQESKNLDLYQKLDDWS) form a coiled coil. The interval 667 to 688 (KLDDWSGFWSWFSLSTWLGYVK) is MPER; binding to GalCer. The helical transmembrane segment at 706-726 (LWGCIRNIRQGYNPLPQIHIH) threads the bilayer. The YXXL motif; contains endocytosis signal signature appears at 717-720 (YNPL). Topologically, residues 727 to 854 (SSAERPDNGG…VRQGLEKVLG (128 aa)) are cytoplasmic.

In terms of assembly, the mature envelope protein (Env) consists of a homotrimer of non-covalently associated gp120-gp41 heterodimers. The resulting complex protrudes from the virus surface as a spike. Interacts with host CD4 and CCR5. Gp120 also interacts with the C-type lectins CD209/DC-SIGN and CLEC4M/DC-SIGNR (collectively referred to as DC-SIGN(R)). As to quaternary structure, the mature envelope protein (Env) consists of a homotrimer of non-covalently associated gp120-gp41 heterodimers. The resulting complex protrudes from the virus surface as a spike. In terms of processing, specific enzymatic cleavages in vivo yield mature proteins. Envelope glycoproteins are synthesized as an inactive precursor that is heavily N-glycosylated and processed likely by host cell furin in the Golgi to yield the mature SU and TM proteins. The cleavage site between SU and TM requires the minimal sequence [KR]-X-[KR]-R.

Its subcellular location is the virion membrane. It is found in the host cell membrane. The protein resides in the host endosome membrane. In terms of biological role, the surface protein gp120 (SU) attaches the virus to the host lymphoid cell by binding to the primary receptor CD4. This interaction induces a structural rearrangement creating a high affinity binding site for a chemokine coreceptor like CCR5. This peculiar 2 stage receptor-interaction strategy allows gp120 to maintain the highly conserved coreceptor-binding site in a cryptic conformation, protected from neutralizing antibodies. These changes are transmitted to the transmembrane protein gp41 and are thought to activate its fusogenic potential by unmasking its fusion peptide. Functionally, surface protein gp120 (SU) may target the virus to gut-associated lymphoid tissue (GALT) by binding host ITGA4/ITGB7 (alpha-4/beta-7 integrins), a complex that mediates T-cell migration to the GALT. Interaction between gp120 and ITGA4/ITGB7 would allow the virus to enter GALT early in the infection, infecting and killing most of GALT's resting CD4+ T-cells. This T-cell depletion is believed to be the major insult to the host immune system leading to AIDS. Its function is as follows. The surface protein gp120 is a ligand for CD209/DC-SIGN and CLEC4M/DC-SIGNR, which are respectively found on dendritic cells (DCs), and on endothelial cells of liver sinusoids and lymph node sinuses. These interactions allow capture of viral particles at mucosal surfaces by these cells and subsequent transmission to permissive cells. DCs are professional antigen presenting cells, critical for host immunity by inducing specific immune responses against a broad variety of pathogens. They act as sentinels in various tissues where they take up antigen, process it, and present it to T-cells following migration to lymphoid organs. SIV subverts the migration properties of dendritic cells to gain access to CD4+ T-cells in lymph nodes. Virus transmission to permissive T-cells occurs either in trans (without DCs infection, through viral capture and transmission), or in cis (following DCs productive infection, through the usual CD4-gp120 interaction), thereby inducing a robust infection. In trans infection, bound virions remain infectious over days and it is proposed that they are not degraded, but protected in non-lysosomal acidic organelles within the DCs close to the cell membrane thus contributing to the viral infectious potential during DCs' migration from the periphery to the lymphoid tissues. On arrival at lymphoid tissues, intact virions recycle back to DCs' cell surface allowing virus transmission to CD4+ T-cells. Virion capture also seems to lead to MHC-II-restricted viral antigen presentation, and probably to the activation of SIV-specific CD4+ cells. The transmembrane protein gp41 (TM) acts as a class I viral fusion protein. Under the current model, the protein has at least 3 conformational states: pre-fusion native state, pre-hairpin intermediate state, and post-fusion hairpin state. During fusion of viral and target intracellular membranes, the coiled coil regions (heptad repeats) assume a trimer-of-hairpins structure, positioning the fusion peptide in close proximity to the C-terminal region of the ectodomain. The formation of this structure appears to drive apposition and subsequent fusion of viral and target cell membranes. Complete fusion occurs in host cell endosomes. The virus undergoes clathrin-dependent internalization long before endosomal fusion, thus minimizing the surface exposure of conserved viral epitopes during fusion and reducing the efficacy of inhibitors targeting these epitopes. Membranes fusion leads to delivery of the nucleocapsid into the cytoplasm. In terms of biological role, the envelope glycoprotein gp160 precursor down-modulates cell surface CD4 antigen by interacting with it in the endoplasmic reticulum and blocking its transport to the cell surface. Functionally, the gp120-gp41 heterodimer allows rapid transcytosis of the virus through CD4 negative cells such as simple epithelial monolayers of the intestinal, rectal and endocervical epithelial barriers. Both gp120 and gp41 specifically recognize glycosphingolipids galactosyl-ceramide (GalCer) or 3' sulfo-galactosyl-ceramide (GalS) present in the lipid rafts structures of epithelial cells. Binding to these alternative receptors allows the rapid transcytosis of the virus through the epithelial cells. This transcytotic vesicle-mediated transport of virions from the apical side to the basolateral side of the epithelial cells does not involve infection of the cells themselves. The sequence is that of Envelope glycoprotein gp160 (env) from Cercopithecidae (Old World monkeys).